A 296-amino-acid chain; its full sequence is MTAKRIDGKAFAAGVRARVAEEVARLKEGHGIVPGLAVVLVGEDPASQVYVGAKGKQTVEVGMASFEHRLPAETSEAELLALIDRLNHDPAVHGILVQLPLPAHLNADLVINALDPAKDVDGFHISNVGRLGTGQKSMVPCTPLGCLMMLRDHLGTLSGLNAVVVGRSNIVGKPMAQLLLGESCTVTIAHSRTRDLAAVCRGADILVAAVGRPEMITGDFVKPGATVIDVGINRIERDGKTKLVGDVDYASAAEVAGAITPVPGGVGPMTIACLLANTLTACCRANGLPEPQGLTA.

NADP(+)-binding positions include 166-168, S191, and I232; that span reads GRS.

This sequence belongs to the tetrahydrofolate dehydrogenase/cyclohydrolase family. Homodimer.

The enzyme catalyses (6R)-5,10-methylene-5,6,7,8-tetrahydrofolate + NADP(+) = (6R)-5,10-methenyltetrahydrofolate + NADPH. It catalyses the reaction (6R)-5,10-methenyltetrahydrofolate + H2O = (6R)-10-formyltetrahydrofolate + H(+). Its pathway is one-carbon metabolism; tetrahydrofolate interconversion. Functionally, catalyzes the oxidation of 5,10-methylenetetrahydrofolate to 5,10-methenyltetrahydrofolate and then the hydrolysis of 5,10-methenyltetrahydrofolate to 10-formyltetrahydrofolate. The chain is Bifunctional protein FolD from Cereibacter sphaeroides (strain ATCC 17029 / ATH 2.4.9) (Rhodobacter sphaeroides).